We begin with the raw amino-acid sequence, 187 residues long: CRISPR system Cmr subunit Cmr1-2 (187 aa).

The protein belongs to the CRISPR system Cmr1 family. In terms of assembly, part of the type III-B Cmr ribonucleoprotein (RNP) complex. This is an elongated RNP with Cmr2 and Cmr3 as the base, with Cmr4 and Cmr5 forming a helical core along the mature crRNA (39 or 45 nt in length), while the complex is capped by Cmr6 and Cmr1. The 5' end of the crRNA is bound to Cmr2 and Cmr3, while Cmr6 and a Cmr1 subunit (Cmr1-1 or Cmr1-2) cap the 3' end of the crRNA. The target RNA lies antiparallel to the crRNA, with its 5' end near Cmr1 and Cmr6 and its 3' end near Cmr2 and Cmr3; major target cleavage occurs nears the junction of Cmr1/Cmr6 and Cmr4/Cmr, with minor cleavage occurring at 6 nt intervals which coincide with the proposed spacing of Cmr4 subunits.

Its subcellular location is the cytoplasm. Functionally, CRISPR (clustered regularly interspaced short palindromic repeat), is an adaptive immune system that provides protection against mobile genetic elements (viruses, transposable elements and conjugative plasmids). CRISPR clusters contain sequences complementary to antecedent mobile elements and target invading nucleic acids. CRISPR clusters are transcribed and processed into CRISPR RNA (crRNA), formerly called psiRNA (prokaryotic silencing) in this organism. Part of the Cmr ribonucleoprotein complex which has divalent cation-dependent endoribonuclease activity specific for ssRNA complementary to the crRNA (target RNA), generating 5' hydroxy- and 3' phosphate or 2'-3' cyclic phosphate termini. Cmr4 is probably the subunit that cleaves target RNA. Cmr complex does not cleave ssDNA complementary to the crRNA. Cleavage of invading RNA is guided by the crRNA; substrate cleavage occurs a fixed distance (14 nt) from the 3' end of the crRNA. In vitro reconstitution shows Cmr1-2 and Cmr5 are not absolutely necessary for target cleavage. The polypeptide is CRISPR system Cmr subunit Cmr1-2 (Pyrococcus furiosus (strain ATCC 43587 / DSM 3638 / JCM 8422 / Vc1)).